The chain runs to 255 residues: Aliphatic sulfonates import ATP-binding protein SsuB (255 aa).

One can recognise an ABC transporter domain in the interval Leu-12 to Leu-233. Residue Gly-44–Ser-51 participates in ATP binding.

It belongs to the ABC transporter superfamily. Aliphatic sulfonates importer (TC 3.A.1.17.2) family. As to quaternary structure, the complex is composed of two ATP-binding proteins (SsuB), two transmembrane proteins (SsuC) and a solute-binding protein (SsuA).

It localises to the cell inner membrane. The catalysed reaction is ATP + H2O + aliphatic sulfonate-[sulfonate-binding protein]Side 1 = ADP + phosphate + aliphatic sulfonateSide 2 + [sulfonate-binding protein]Side 1.. Part of the ABC transporter complex SsuABC involved in aliphatic sulfonates import. Responsible for energy coupling to the transport system. The protein is Aliphatic sulfonates import ATP-binding protein SsuB of Escherichia coli (strain K12).